The following is a 591-amino-acid chain: Aspartate--tRNA(Asp/Asn) ligase (591 aa).

E176 lines the L-aspartate pocket. The segment at 200 to 203 (QLFK) is aspartate. L-aspartate is bound at residue R222. Residues 222–224 (RDE) and Q231 each bind ATP. Residue H450 participates in L-aspartate binding. E484 contacts ATP. L-aspartate is bound at residue R491. 536–539 (GLDR) provides a ligand contact to ATP.

Belongs to the class-II aminoacyl-tRNA synthetase family. Type 1 subfamily. In terms of assembly, homodimer.

It is found in the cytoplasm. It catalyses the reaction tRNA(Asx) + L-aspartate + ATP = L-aspartyl-tRNA(Asx) + AMP + diphosphate. Its function is as follows. Aspartyl-tRNA synthetase with relaxed tRNA specificity since it is able to aspartylate not only its cognate tRNA(Asp) but also tRNA(Asn). Reaction proceeds in two steps: L-aspartate is first activated by ATP to form Asp-AMP and then transferred to the acceptor end of tRNA(Asp/Asn). In Bacillus anthracis (strain A0248), this protein is Aspartate--tRNA(Asp/Asn) ligase.